The sequence spans 749 residues: Catalase-peroxidase 2 (749 aa).

An N-terminal signal peptide occupies residues 1 to 27 (MFKRTIPLFAAFTLAISPSIFPNYAHA). The tryptophyl-tyrosyl-methioninium (Trp-Tyr) (with M-255) cross-link spans 107 to 229 (WHAAGTYRIY…LAATVMGLIY (123 aa)). Catalysis depends on His-108, which acts as the Proton acceptor. A cross-link (tryptophyl-tyrosyl-methioninium (Tyr-Met) (with W-107)) is located at residues 229 to 255 (YVNPEGPNGVPDPLAAAEKIRETFGRM). A heme b-binding site is contributed by His-270.

This sequence belongs to the peroxidase family. Peroxidase/catalase subfamily. As to quaternary structure, homodimer or homotetramer. Heme b is required as a cofactor. Post-translationally, formation of the three residue Trp-Tyr-Met cross-link is important for the catalase, but not the peroxidase activity of the enzyme.

It catalyses the reaction H2O2 + AH2 = A + 2 H2O. It carries out the reaction 2 H2O2 = O2 + 2 H2O. Bifunctional enzyme with both catalase and broad-spectrum peroxidase activity. This is Catalase-peroxidase 2 from Legionella pneumophila (strain Lens).